A 196-amino-acid chain; its full sequence is Pyridoxal 5'-phosphate synthase subunit PdxT (196 aa).

Residue 47–49 (GES) coordinates L-glutamine. Cysteine 79 functions as the Nucleophile in the catalytic mechanism. L-glutamine is bound by residues arginine 106 and 134–135 (IR). Active-site charge relay system residues include histidine 170 and glutamate 172.

It belongs to the glutaminase PdxT/SNO family. In the presence of PdxS, forms a dodecamer of heterodimers. Only shows activity in the heterodimer.

It carries out the reaction aldehydo-D-ribose 5-phosphate + D-glyceraldehyde 3-phosphate + L-glutamine = pyridoxal 5'-phosphate + L-glutamate + phosphate + 3 H2O + H(+). It catalyses the reaction L-glutamine + H2O = L-glutamate + NH4(+). It participates in cofactor biosynthesis; pyridoxal 5'-phosphate biosynthesis. Its function is as follows. Catalyzes the hydrolysis of glutamine to glutamate and ammonia as part of the biosynthesis of pyridoxal 5'-phosphate. The resulting ammonia molecule is channeled to the active site of PdxS. The sequence is that of Pyridoxal 5'-phosphate synthase subunit PdxT from Bacillus subtilis (strain 168).